The sequence spans 396 residues: MSEYSLFTSESVSEGHPDKIADQISDAVLDAIIAEDKYARVACETLVKTGVAIIAGEVSTSAWVDLEDIVRNVILDIGYNSSDVGFDGATCGVMNIIGKQSVDIAQGVDRSKPEDQGAGDQGLMFGYASNETDVLMPAPITFSHQLVQRQAEARKSGLLPWLRPDAKSQVTCRYENGKVVGVDAIVLSTQHNPDVSYKDLREGVMELIVKHVIPAHLLHKDTQFHINPTGNFIIGGPVGDCGLTGRKIIVDTYGGMARHGGGAFSGKDPSKVDRSAAYAGRYVAKNIVAAGLAERCEIQVSYAIGVAQPMSISLNTFGTGKLSDDKIIKLVRDNFDLRPYAITTMLDLLHPMYQATAAYGHFGRTPVEMTIGDDTFTAFTWEKTDRADALRAAAGL.

Residue histidine 16 participates in ATP binding. Mg(2+) is bound at residue aspartate 18. Glutamate 44 lines the K(+) pocket. L-methionine contacts are provided by glutamate 57 and glutamine 100. The tract at residues 100–110 (QSVDIAQGVDR) is flexible loop. ATP-binding positions include 165-167 (DAK), aspartate 240, 246-247 (RK), alanine 263, and lysine 267. L-methionine is bound at residue aspartate 240. Lysine 271 lines the L-methionine pocket.

This sequence belongs to the AdoMet synthase family. Homotetramer; dimer of dimers. Mg(2+) serves as cofactor. Requires K(+) as cofactor.

It localises to the cytoplasm. The enzyme catalyses L-methionine + ATP + H2O = S-adenosyl-L-methionine + phosphate + diphosphate. Its pathway is amino-acid biosynthesis; S-adenosyl-L-methionine biosynthesis; S-adenosyl-L-methionine from L-methionine: step 1/1. Functionally, catalyzes the formation of S-adenosylmethionine (AdoMet) from methionine and ATP. The overall synthetic reaction is composed of two sequential steps, AdoMet formation and the subsequent tripolyphosphate hydrolysis which occurs prior to release of AdoMet from the enzyme. This chain is S-adenosylmethionine synthase, found in Pseudomonas savastanoi pv. phaseolicola (strain 1448A / Race 6) (Pseudomonas syringae pv. phaseolicola (strain 1448A / Race 6)).